Here is a 491-residue protein sequence, read N- to C-terminus: Transcription factor AP-2-alpha (491 aa).

The segment at Gly-74 to Leu-161 is disordered. The PPxY motif signature appears at Tyr-111–Tyr-116. 2 stretches are compositionally biased toward low complexity: residues Ile-119–Ser-128 and Gln-142–Gln-155. Residues Lys-231 and Lys-238 each participate in a glycyl lysine isopeptide (Lys-Gly) (interchain with G-Cter in SUMO2) cross-link. Position 293 is a phosphoserine; by PKA (Ser-293). The tract at residues Arg-334–Asp-464 is H-S-H (helix-span-helix), dimerization. Polar residues predominate over residues Leu-468–Lys-481. The interval Leu-468–Lys-491 is disordered. The segment covering Ser-482–Lys-491 has biased composition (basic and acidic residues).

The protein belongs to the AP-2 family. Binds DNA as a dimer. Can form homodimers or heterodimers with other AP-2 family members. Interacts with WWOX. Interacts with CITED4. Interacts with UBE2I. Interacts with RALBP1 in a complex also containing EPN1 and NUMB during interphase and mitosis. Interacts with KCTD1; this interaction represses transcription activation. Interacts (via C-terminus) with CITED2 (via C-terminus); the interaction stimulates TFAP2A-transcriptional activation. Interacts (via N-terminus) with EP300 (via N-terminus); the interaction requires CITED2. Interacts with KCTD15; this interaction inhibits TFAP2A transcriptional activation.

Its subcellular location is the nucleus. Sequence-specific DNA-binding protein that interacts with inducible viral and cellular enhancer elements to regulate transcription of selected genes. AP-2 factors bind to the consensus sequence 5'-GCCNNNGGC-3' and activate genes involved in a large spectrum of important biological functions including proper eye, face, body wall, limb and neural tube development. They also suppress a number of genes including MCAM/MUC18, C/EBP alpha and MYC. AP-2-alpha is the only AP-2 protein required for early morphogenesis of the lens vesicle. Together with the CITED2 coactivator, stimulates the PITX2 P1 promoter transcription activation. Associates with chromatin to the PITX2 P1 promoter region. This chain is Transcription factor AP-2-alpha (TFAP2A), found in Ovis aries (Sheep).